Here is a 234-residue protein sequence, read N- to C-terminus: bZIP transcription factor 1 (234 aa).

The interval 67-134 is disordered; the sequence is RAQSDGSNAL…DKQRNAQQQL (68 aa). The segment covering 70–86 has biased composition (polar residues); it reads SDGSNALLSSIGPSGTT. Over residues 88 to 128 the composition is skewed to basic and acidic residues; sequence RPRDEMDCFTDTHKHKRGDGNKSRRREQCRANQARYRDKQR. Positions 106–169 constitute a bZIP domain; it reads DGNKSRRREQ…RTNQSPWNTV (64 aa). Residues 109 to 128 are basic motif; that stretch reads KSRRREQCRANQARYRDKQR. Residues 134–155 are leucine-zipper; that stretch reads LERSVEQLQSELSTLKHRNLDL.

This sequence belongs to the bZIP family. Interacts with PKZ1.

It localises to the nucleus. Functionally, required for normal zoospore movement, formation of appressoria by germinated zoospore cysts and plant infection. The chain is bZIP transcription factor 1 from Phytophthora infestans (Potato late blight agent).